The chain runs to 514 residues: Uridylate cyclase (514 aa).

Guanylate cyclase domains lie at valine 49–alanine 190 and valine 286–glutamine 428. Residues tyrosine 52, arginine 105, phenylalanine 178, asparagine 184–lysine 188, and aspartate 291–threonine 296 each bind a ribonucleoside 5'-triphosphate. Ca(2+)-binding residues include aspartate 291, isoleucine 292, and aspartate 339. Mn(2+) is bound at residue aspartate 291. The segment at isoleucine 495 to arginine 514 is disordered. Basic and acidic residues predominate over residues arginine 496–arginine 514.

It belongs to the adenylyl cyclase class-4/guanylyl cyclase family. Pyrimidine cyclase subfamily. In terms of assembly, monomer. A divalent metal cation is required as a cofactor.

It localises to the cytoplasm. The enzyme catalyses UTP = 3',5'-cyclic UMP + diphosphate. Its function is as follows. Pycsar (pyrimidine cyclase system for antiphage resistance) provides immunity against bacteriophage. The pyrimidine cyclase (PycC) synthesizes cyclic nucleotides in response to infection; these serve as specific second messenger signals. The signals activate the adjacent effector, leading to bacterial cell death and abortive phage infection. A clade A Pycsar system. The pyrimidine cyclase gene of a two-gene Pycsar system, generates cyclic UMP (cUMP) from UTP, has little to no activity on ATP, CTP or GTP. Expression of this and adjacent effector PaPycTIR (AC P0DV41) probably confers resistance to bacteriophage. The genes are probably only expressed in response to bacteriophage infection. Does not have adenylyl or guanylyl cyclase activity. This Pseudomonas aeruginosa protein is Uridylate cyclase.